A 509-amino-acid chain; its full sequence is tRNA-2-methylthio-N(6)-dimethylallyladenosine synthase (509 aa).

Residues M1–E20 are disordered. The region spanning R66 to L184 is the MTTase N-terminal domain. Residues C75, C111, C145, C221, C225, and C228 each contribute to the [4Fe-4S] cluster site. A Radical SAM core domain is found at R207–K437. The TRAM domain maps to K440–G503.

The protein belongs to the methylthiotransferase family. MiaB subfamily. Monomer. [4Fe-4S] cluster serves as cofactor.

It is found in the cytoplasm. The catalysed reaction is N(6)-dimethylallyladenosine(37) in tRNA + (sulfur carrier)-SH + AH2 + 2 S-adenosyl-L-methionine = 2-methylsulfanyl-N(6)-dimethylallyladenosine(37) in tRNA + (sulfur carrier)-H + 5'-deoxyadenosine + L-methionine + A + S-adenosyl-L-homocysteine + 2 H(+). Functionally, catalyzes the methylthiolation of N6-(dimethylallyl)adenosine (i(6)A), leading to the formation of 2-methylthio-N6-(dimethylallyl)adenosine (ms(2)i(6)A) at position 37 in tRNAs that read codons beginning with uridine. In Bacillus velezensis (strain DSM 23117 / BGSC 10A6 / LMG 26770 / FZB42) (Bacillus amyloliquefaciens subsp. plantarum), this protein is tRNA-2-methylthio-N(6)-dimethylallyladenosine synthase.